Reading from the N-terminus, the 238-residue chain is Aspartate/glutamate leucyltransferase (238 aa).

Belongs to the R-transferase family. Bpt subfamily.

It localises to the cytoplasm. It catalyses the reaction N-terminal L-glutamyl-[protein] + L-leucyl-tRNA(Leu) = N-terminal L-leucyl-L-glutamyl-[protein] + tRNA(Leu) + H(+). The enzyme catalyses N-terminal L-aspartyl-[protein] + L-leucyl-tRNA(Leu) = N-terminal L-leucyl-L-aspartyl-[protein] + tRNA(Leu) + H(+). Functions in the N-end rule pathway of protein degradation where it conjugates Leu from its aminoacyl-tRNA to the N-termini of proteins containing an N-terminal aspartate or glutamate. This is Aspartate/glutamate leucyltransferase from Aeromonas hydrophila subsp. hydrophila (strain ATCC 7966 / DSM 30187 / BCRC 13018 / CCUG 14551 / JCM 1027 / KCTC 2358 / NCIMB 9240 / NCTC 8049).